Consider the following 1561-residue polypeptide: Sterile alpha motif domain-containing protein 9-like (1561 aa).

The region spanning 14–79 (WTKEHVRKWV…RMYNKLISSP (66 aa)) is the SAM domain. Positions 78–157 (SPESHNQDSR…DNKPKPEQMS (80 aa)) are disordered. 2 stretches are compositionally biased toward basic and acidic residues: residues 82-107 (HNQD…KNEE) and 142-153 (VTKDMEDNKPKP).

Interacts with EEA1.

Its subcellular location is the early endosome. It localises to the mitochondrion. May be involved in endosome fusion. Mediates down-regulation of growth factor signaling via internalization of growth factor receptors. This Mus musculus (Mouse) protein is Sterile alpha motif domain-containing protein 9-like (Samd9l).